The following is a 90-amino-acid chain: Co-chaperonin GroES (90 aa).

This sequence belongs to the GroES chaperonin family. Heptamer of 7 subunits arranged in a ring. Interacts with the chaperonin GroEL.

Its subcellular location is the cytoplasm. Its function is as follows. Together with the chaperonin GroEL, plays an essential role in assisting protein folding. The GroEL-GroES system forms a nano-cage that allows encapsulation of the non-native substrate proteins and provides a physical environment optimized to promote and accelerate protein folding. GroES binds to the apical surface of the GroEL ring, thereby capping the opening of the GroEL channel. The polypeptide is Co-chaperonin GroES (Helicobacter hepaticus (strain ATCC 51449 / 3B1)).